Consider the following 81-residue polypeptide: Photosystem I iron-sulfur center (81 aa).

4Fe-4S ferredoxin-type domains are found at residues 2–31 and 37–68; these read SHSVKIYNTCIGCTQCVRACPTDVLEMVPW and GQIASSPRTEDCVGCKRCESACPTDFLSVRVY. [4Fe-4S] cluster contacts are provided by C11, C14, C17, C21, C48, C51, C54, and C58.

In terms of assembly, the eukaryotic PSI reaction center is composed of at least 11 subunits. The cofactor is [4Fe-4S] cluster.

Its subcellular location is the plastid. The protein resides in the chloroplast thylakoid membrane. It carries out the reaction reduced [plastocyanin] + hnu + oxidized [2Fe-2S]-[ferredoxin] = oxidized [plastocyanin] + reduced [2Fe-2S]-[ferredoxin]. Functionally, apoprotein for the two 4Fe-4S centers FA and FB of photosystem I (PSI); essential for photochemical activity. FB is the terminal electron acceptor of PSI, donating electrons to ferredoxin. The C-terminus interacts with PsaA/B/D and helps assemble the protein into the PSI complex. Required for binding of PsaD and PsaE to PSI. PSI is a plastocyanin/cytochrome c6-ferredoxin oxidoreductase, converting photonic excitation into a charge separation, which transfers an electron from the donor P700 chlorophyll pair to the spectroscopically characterized acceptors A0, A1, FX, FA and FB in turn. This chain is Photosystem I iron-sulfur center, found in Euglena gracilis.